The primary structure comprises 340 residues: Solute carrier family 35 member G3 (340 aa).

Positions 11-31 are disordered; sequence PDFTQPSPPSTPSSLTSNHHN. Transmembrane regions (helical) follow at residues 39 to 59, 69 to 89, 107 to 127, 160 to 180, 189 to 209, 223 to 243, 257 to 277, 283 to 303, and 307 to 327; these read TKGLFVALLGGGLSAGFVGPF, LPSLELLIFRCLFHLPIALIL, FLHAILNVLSIGCAYSAVQVV, AWCGLFGSTLGLIIIVGPGLG, LYTALGYVLAFLGGLALSLGL, TVAFLFGLVGLIVSVPGLFVL, CMVAVGLLALVSFVCVSYAVT, LVCAVLHSEVVVALMLQYYVL, and VAPSDIMGAGVVLGSIAIITA. The EamA 1 domain maps to 51 to 176; sequence LSAGFVGPFS…STLGLIIIVG (126 aa). The 105-residue stretch at 223-327 folds into the EamA 2 domain; it reads TVAFLFGLVG…VLGSIAIITA (105 aa).

The protein belongs to the SLC35G solute transporter family.

Its subcellular location is the membrane. The protein is Solute carrier family 35 member G3 (Slc35g3) of Rattus norvegicus (Rat).